The sequence spans 436 residues: Na(+)/H(+) antiporter NhaA 2 (436 aa).

Helical transmembrane passes span 35-55 (FGGG…NSPW), 80-100 (LATW…GLEL), 116-136 (ALPV…YVGI), 147-167 (GWAI…AVIG), 176-196 (AFLL…IAIF), 201-221 (FKLT…LLVQ), 226-246 (WWWA…ESGV), 283-303 (VSAG…SLRG), 313-333 (PIVV…IFGS), 354-374 (LLGV…IGEL), and 385-405 (VKAA…AVLS).

This sequence belongs to the NhaA Na(+)/H(+) (TC 2.A.33) antiporter family.

The protein resides in the cell membrane. The enzyme catalyses Na(+)(in) + 2 H(+)(out) = Na(+)(out) + 2 H(+)(in). In terms of biological role, na(+)/H(+) antiporter that extrudes sodium in exchange for external protons. The sequence is that of Na(+)/H(+) antiporter NhaA 2 from Salinispora arenicola (strain CNS-205).